Here is a 389-residue protein sequence, read N- to C-terminus: Nicotinamide-nucleotide adenylyltransferase (389 aa).

The short motif at 380-383 (KKQK) is the Nuclear localization signal element.

Belongs to the eukaryotic NMN adenylyltransferase family. Abundantly expressed in neuronal and muscle cells. Present at relatively low levels at the neuromuscular junction. Expressed in the eye; present in photoreceptor cells and various neurons in the lamina cortex and medulla cortex and at low levels in the lamina.

Its subcellular location is the nucleus. The protein localises to the cytoplasm. It localises to the presynaptic active zone. The enzyme catalyses beta-nicotinamide D-ribonucleotide + ATP + H(+) = diphosphate + NAD(+). The catalysed reaction is nicotinate beta-D-ribonucleotide + ATP + H(+) = deamido-NAD(+) + diphosphate. It functions in the pathway cofactor biosynthesis; NAD(+) biosynthesis; NAD(+) from nicotinamide D-ribonucleotide: step 1/1. Its pathway is cofactor biosynthesis; NAD(+) biosynthesis; deamido-NAD(+) from nicotinate D-ribonucleotide: step 1/1. In terms of biological role, catalyzes the formation of NAD(+) from nicotinamide mononucleotide (NMN) and ATP. Essential for viability. Stress-response chaperone protein that prevents toxic aggregation of proteins and promotes proteasome-mediated degradation of misfolded proteins; this is independent of its NAD(+) synthesis activity. Neuroprotective in response to toxic protein aggregation, for example by overexpressed Atx-1/ataxin-1. Required for maintenance and integrity of mature neurons, protecting them from neuronal activity-induced neurodegeneration. Required for the maintenance of axonal and dendritic integrity in both central and peripheral neurons. Chaperone function and neuroprotective roles are largely independent of NAD(+) synthesis activity. Functionally, catalyzes the formation of NAD(+) from nicotinamide mononucleotide (NMN) and ATP. Has, or stimulates, chaperone holdase activity but not refoldase activity. Does not have neuroprotective properties and may stimulate apoptosis and neurodegeneration in response to toxic protein aggregates. Its function is as follows. Catalyzes the formation of NAD(+) from nicotinamide mononucleotide (NMN) and ATP. Has, or stimulates, chaperone holdase and refoldase activity. Neuroprotective and reduces the toxic load of protein aggregates, preventing apoptosis and neurodegeneration. Promotes clearance of nuclear misfolded protein aggregates. In Drosophila melanogaster (Fruit fly), this protein is Nicotinamide-nucleotide adenylyltransferase.